The chain runs to 207 residues: Thiamine-phosphate synthase (207 aa).

4-amino-2-methyl-5-(diphosphooxymethyl)pyrimidine-binding positions include 35 to 39 (QYRDK) and asparagine 67. Mg(2+) is bound by residues aspartate 68 and aspartate 86. A 4-amino-2-methyl-5-(diphosphooxymethyl)pyrimidine-binding site is contributed by threonine 105. 132–134 (SVT) lines the 2-[(2R,5Z)-2-carboxy-4-methylthiazol-5(2H)-ylidene]ethyl phosphate pocket. Residue lysine 135 participates in 4-amino-2-methyl-5-(diphosphooxymethyl)pyrimidine binding. Glycine 162 lines the 2-[(2R,5Z)-2-carboxy-4-methylthiazol-5(2H)-ylidene]ethyl phosphate pocket.

It belongs to the thiamine-phosphate synthase family. Requires Mg(2+) as cofactor.

The catalysed reaction is 2-[(2R,5Z)-2-carboxy-4-methylthiazol-5(2H)-ylidene]ethyl phosphate + 4-amino-2-methyl-5-(diphosphooxymethyl)pyrimidine + 2 H(+) = thiamine phosphate + CO2 + diphosphate. It carries out the reaction 2-(2-carboxy-4-methylthiazol-5-yl)ethyl phosphate + 4-amino-2-methyl-5-(diphosphooxymethyl)pyrimidine + 2 H(+) = thiamine phosphate + CO2 + diphosphate. The enzyme catalyses 4-methyl-5-(2-phosphooxyethyl)-thiazole + 4-amino-2-methyl-5-(diphosphooxymethyl)pyrimidine + H(+) = thiamine phosphate + diphosphate. The protein operates within cofactor biosynthesis; thiamine diphosphate biosynthesis; thiamine phosphate from 4-amino-2-methyl-5-diphosphomethylpyrimidine and 4-methyl-5-(2-phosphoethyl)-thiazole: step 1/1. Condenses 4-methyl-5-(beta-hydroxyethyl)thiazole monophosphate (THZ-P) and 2-methyl-4-amino-5-hydroxymethyl pyrimidine pyrophosphate (HMP-PP) to form thiamine monophosphate (TMP). The protein is Thiamine-phosphate synthase of Pseudomonas putida (strain ATCC 700007 / DSM 6899 / JCM 31910 / BCRC 17059 / LMG 24140 / F1).